The primary structure comprises 278 residues: Extracellular metalloprotease MCYG_03238 (278 aa).

The N-terminal stretch at 1–19 (MRFSIVLSSIAALSSVAAA) is a signal peptide. The N-linked (GlcNAc...) asparagine glycan is linked to asparagine 52. Histidine 170 contacts Zn(2+). The active site involves glutamate 171. Histidine 174 lines the Zn(2+) pocket. Cysteines 209 and 255 form a disulfide.

The protein belongs to the peptidase M43B family.

The protein resides in the secreted. In terms of biological role, secreted metalloproteinase that allows assimilation of proteinaceous substrates. Plays a pivotal role as a pathogenicity determinant during infections and contributes to the ability of the pathogen to persist within the mammalian host. This is Extracellular metalloprotease MCYG_03238 from Arthroderma otae (strain ATCC MYA-4605 / CBS 113480) (Microsporum canis).